A 177-amino-acid chain; its full sequence is Transcription antitermination protein NusB (177 aa).

The tract at residues Met-1 to Arg-35 is disordered. The span at Pro-17–Lys-28 shows a compositional bias: low complexity.

The protein belongs to the NusB family.

In terms of biological role, involved in transcription antitermination. Required for transcription of ribosomal RNA (rRNA) genes. Binds specifically to the boxA antiterminator sequence of the ribosomal RNA (rrn) operons. This chain is Transcription antitermination protein NusB, found in Acidovorax ebreus (strain TPSY) (Diaphorobacter sp. (strain TPSY)).